The sequence spans 249 residues: ATP synthase subunit a (249 aa).

The next 6 membrane-spanning stretches (helical) occupy residues 26–46 (FTNV…FLYL), 84–104 (FFPF…IGLF), 114–134 (IIVT…YGFF), 143–163 (LFVP…IEII), 185–205 (ITLK…ALGI), and 208–228 (TVLP…VAFL).

The protein belongs to the ATPase A chain family. As to quaternary structure, F-type ATPases have 2 components, CF(1) - the catalytic core - and CF(0) - the membrane proton channel. CF(1) has five subunits: alpha(3), beta(3), gamma(1), delta(1), epsilon(1). CF(0) has three main subunits: a(1), b(2) and c(9-12). The alpha and beta chains form an alternating ring which encloses part of the gamma chain. CF(1) is attached to CF(0) by a central stalk formed by the gamma and epsilon chains, while a peripheral stalk is formed by the delta and b chains.

It localises to the cell inner membrane. In terms of biological role, key component of the proton channel; it plays a direct role in the translocation of protons across the membrane. This is ATP synthase subunit a from Brucella ovis (strain ATCC 25840 / 63/290 / NCTC 10512).